A 683-amino-acid polypeptide reads, in one-letter code: DNA ligase (683 aa).

NAD(+) contacts are provided by residues 35–39 (DADYD), 84–85 (SL), and E115. K117 (N6-AMP-lysine intermediate) is an active-site residue. Positions 138, 175, 293, and 317 each coordinate NAD(+). Zn(2+)-binding residues include C411, C414, C429, and C435. Residues 598 to 683 (QTNSAVSGKT…LQNISTGAQQ (86 aa)) form the BRCT domain.

The protein belongs to the NAD-dependent DNA ligase family. LigA subfamily. Mg(2+) serves as cofactor. It depends on Mn(2+) as a cofactor.

It carries out the reaction NAD(+) + (deoxyribonucleotide)n-3'-hydroxyl + 5'-phospho-(deoxyribonucleotide)m = (deoxyribonucleotide)n+m + AMP + beta-nicotinamide D-nucleotide.. Functionally, DNA ligase that catalyzes the formation of phosphodiester linkages between 5'-phosphoryl and 3'-hydroxyl groups in double-stranded DNA using NAD as a coenzyme and as the energy source for the reaction. It is essential for DNA replication and repair of damaged DNA. This is DNA ligase from Nitrosomonas eutropha (strain DSM 101675 / C91 / Nm57).